We begin with the raw amino-acid sequence, 195 residues long: Segregation and condensation protein B (195 aa).

The segment at 169–195 (LEDVAASQENSREAGGRGSIPGHPGEE) is disordered.

This sequence belongs to the ScpB family. In terms of assembly, homodimer. Homodimerization may be required to stabilize the binding of ScpA to the Smc head domains. Component of a cohesin-like complex composed of ScpA, ScpB and the Smc homodimer, in which ScpA and ScpB bind to the head domain of Smc. The presence of the three proteins is required for the association of the complex with DNA.

The protein resides in the cytoplasm. Functionally, participates in chromosomal partition during cell division. May act via the formation of a condensin-like complex containing Smc and ScpA that pull DNA away from mid-cell into both cell halves. This is Segregation and condensation protein B from Moorella thermoacetica (strain ATCC 39073 / JCM 9320).